The chain runs to 815 residues: Phenylalanine--tRNA ligase beta subunit (815 aa).

Positions 39–148 (SKELQKFEVA…KDAVVGDNFT (110 aa)) constitute a tRNA-binding domain. The 76-residue stretch at 421 to 496 (PQKKPLDFSV…RIYGYDKIES (76 aa)) folds into the B5 domain. Mg(2+)-binding residues include D474, D480, E483, and E484. The 94-residue stretch at 721 to 814 (SDYQANFRDY…ISQKFQGILR (94 aa)) folds into the FDX-ACB domain.

It belongs to the phenylalanyl-tRNA synthetase beta subunit family. Type 1 subfamily. In terms of assembly, tetramer of two alpha and two beta subunits. The cofactor is Mg(2+).

The protein resides in the cytoplasm. The catalysed reaction is tRNA(Phe) + L-phenylalanine + ATP = L-phenylalanyl-tRNA(Phe) + AMP + diphosphate + H(+). The chain is Phenylalanine--tRNA ligase beta subunit (pheT) from Rickettsia prowazekii (strain Madrid E).